The following is a 616-amino-acid chain: FNIP repeat-containing protein DDB_G0290639 (616 aa).

Residues 239–274 (FENNNNNNNNNNNNNNNNNNNNNNNNNNNNNKKTEK) are a coiled coil. The span at 241–269 (NNNNNNNNNNNNNNNNNNNNNNNNNNNNN) shows a compositional bias: low complexity. Residues 241–270 (NNNNNNNNNNNNNNNNNNNNNNNNNNNNNK) are disordered. FNIP repeat units follow at residues 337-379 (FEES…FNDG), 380-421 (FNQS…KLCN), 423-464 (FSQP…VFYD), 466-508 (FNQL…FSDG), 509-550 (FNQT…LIDS), and 552-593 (FQQP…ILDK).

This Dictyostelium discoideum (Social amoeba) protein is FNIP repeat-containing protein DDB_G0290639.